We begin with the raw amino-acid sequence, 142 residues long: Nucleoside diphosphate kinase (142 aa).

K11, F59, R87, T93, R104, and N114 together coordinate ATP. The Pros-phosphohistidine intermediate role is filled by H117.

Belongs to the NDK family. As to quaternary structure, homotetramer. It depends on Mg(2+) as a cofactor.

It localises to the cytoplasm. The enzyme catalyses a 2'-deoxyribonucleoside 5'-diphosphate + ATP = a 2'-deoxyribonucleoside 5'-triphosphate + ADP. It catalyses the reaction a ribonucleoside 5'-diphosphate + ATP = a ribonucleoside 5'-triphosphate + ADP. Major role in the synthesis of nucleoside triphosphates other than ATP. The ATP gamma phosphate is transferred to the NDP beta phosphate via a ping-pong mechanism, using a phosphorylated active-site intermediate. The chain is Nucleoside diphosphate kinase from Yersinia pestis bv. Antiqua (strain Antiqua).